The sequence spans 516 residues: L-amino acid oxidase Lm29 (516 aa).

A signal peptide spans 1–18 (MNVFFMFSLLFLAALGSC). C28 and C191 are joined by a disulfide. Residues 61–62 (MS), 81–82 (EA), R89, and 105–108 (GPMR) contribute to the FAD site. R108 is a substrate binding site. A glycan (N-linked (GlcNAc...) asparagine) is linked at N190. Residue H241 participates in substrate binding. Position 279 (V279) interacts with FAD. A disulfide bond links C349 and C430. Residue N379 is glycosylated (N-linked (GlcNAc...) asparagine). Substrate is bound at residue Y390. Residues E475 and 482–487 (GWIDST) each bind FAD. Substrate is bound at residue 482-483 (GW).

Belongs to the flavin monoamine oxidase family. FIG1 subfamily. As to quaternary structure, homodimer; non-covalently linked. The cofactor is FAD. In terms of tissue distribution, expressed by the venom gland.

Its subcellular location is the secreted. It carries out the reaction an L-alpha-amino acid + O2 + H2O = a 2-oxocarboxylate + H2O2 + NH4(+). It catalyses the reaction L-leucine + O2 + H2O = 4-methyl-2-oxopentanoate + H2O2 + NH4(+). The enzyme catalyses L-phenylalanine + O2 + H2O = 3-phenylpyruvate + H2O2 + NH4(+). The catalysed reaction is L-tryptophan + O2 + H2O = indole-3-pyruvate + H2O2 + NH4(+). It carries out the reaction L-methionine + O2 + H2O = 4-methylsulfanyl-2-oxobutanoate + H2O2 + NH4(+). It catalyses the reaction L-isoleucine + O2 + H2O = (S)-3-methyl-2-oxopentanoate + H2O2 + NH4(+). The enzyme catalyses L-tyrosine + O2 + H2O = 3-(4-hydroxyphenyl)pyruvate + H2O2 + NH4(+). Functionally, catalyzes an oxidative deamination of predominantly hydrophobic and aromatic L-amino acids, thus producing hydrogen peroxide that may contribute to the diverse toxic effects of this enzyme. Is highly active on L-Met=L-Leu&gt;&gt;L-Phe&gt;L-Trp&gt;L-Tyr&gt;L-Ile, and weakly or not active on L-His, L-Arg, L-Val, L-Gln, L-Thr, L-Lys, and L-Ser. Exhibits a low myotoxicity (a mild myonecrosis is observed after injection in mice quadriceps muscle). In vitro, is cytotoxic to a lot of human cell lines, including AGS (IC(50)=22.7 ug/ml), MCF-7 (IC(50)=1.4 ug/ml), HL-60, HeLa and Jurkat cells, as well as to the parasite Leishmania brasiliensis (IC(50)=2.22 ug/ml). This cytotoxicity is dependent on the production of hydrogen peroxyde, since it is inhibited by catalase, a hydrogen peroxyde scavenger. The polypeptide is L-amino acid oxidase Lm29 (Lachesis muta (South American bushmaster)).